The sequence spans 321 residues: MYLYTLILLFLASANVNAYANPGACSGNCWTHDPGLYQRKSDGKYFRFATGGGIHIASADSLEGPWTDDGYVLPSGSIIDLDGKTNLWAPDLHYHDGTYYLYYAVSSLGSQNSAIGVATSKTMEAGSWTDHGTTGIESTPSSPYNTIDANWIAVGGNQYVNFGSYWNNLFQVEMENGLKVKSGATPHQIAYNASGIHRQEAAFMFERNNYFYLTFSGGIALGYNDTWPAPGEEYFIAVCRSTSATGGFVDKNGVSCLNSGGSLLLSSHDFVYGPGGQGILQDSSKGFVLYYHYADTRIGKAVEDYQFGWNQLKWENDWPSV.

The first 18 residues, 1–18 (MYLYTLILLFLASANVNA), serve as a signal peptide directing secretion. Catalysis depends on Asp-33, which acts as the Proton acceptor. An N-linked (GlcNAc...) asparagine glycan is attached at Asn-192. Residue Glu-200 is the Proton donor of the active site. Asn-224 carries N-linked (GlcNAc...) asparagine glycosylation.

The protein belongs to the glycosyl hydrolase 43 family.

The protein localises to the secreted. The catalysed reaction is Endohydrolysis of (1-&gt;5)-alpha-arabinofuranosidic linkages in (1-&gt;5)-arabinans.. It participates in glycan metabolism; L-arabinan degradation. Endo-1,5-alpha-L-arabinanase involved in degradation of pectin. Its preferred substrate is linear 1,5-alpha-L-arabinan. In Aspergillus fumigatus (strain CBS 144.89 / FGSC A1163 / CEA10) (Neosartorya fumigata), this protein is Probable arabinan endo-1,5-alpha-L-arabinosidase C (abnC).